A 478-amino-acid chain; its full sequence is Aspartyl/glutamyl-tRNA(Asn/Gln) amidotransferase subunit B (478 aa).

This sequence belongs to the GatB/GatE family. GatB subfamily. In terms of assembly, heterotrimer of A, B and C subunits.

The enzyme catalyses L-glutamyl-tRNA(Gln) + L-glutamine + ATP + H2O = L-glutaminyl-tRNA(Gln) + L-glutamate + ADP + phosphate + H(+). It carries out the reaction L-aspartyl-tRNA(Asn) + L-glutamine + ATP + H2O = L-asparaginyl-tRNA(Asn) + L-glutamate + ADP + phosphate + 2 H(+). Its function is as follows. Allows the formation of correctly charged Asn-tRNA(Asn) or Gln-tRNA(Gln) through the transamidation of misacylated Asp-tRNA(Asn) or Glu-tRNA(Gln) in organisms which lack either or both of asparaginyl-tRNA or glutaminyl-tRNA synthetases. The reaction takes place in the presence of glutamine and ATP through an activated phospho-Asp-tRNA(Asn) or phospho-Glu-tRNA(Gln). The protein is Aspartyl/glutamyl-tRNA(Asn/Gln) amidotransferase subunit B of Lachnoclostridium phytofermentans (strain ATCC 700394 / DSM 18823 / ISDg) (Clostridium phytofermentans).